We begin with the raw amino-acid sequence, 112 residues long: MLMVKKTIYVNPDSGQNRKVSDRGLTSRDRRRIARWEKRIAYALKNGVTPGFNAIDDGPEYKINEDPMDKVDKALATPFPRDVEKIEDEKYEDVMHRVVNHAHQRNPNKKWS.

The polypeptide is Transcription termination factor nun (nun) (Escherichia phage HK022 (Bacteriophage HK022)).